The sequence spans 180 residues: CDP-archaeol synthase (180 aa).

The next 5 membrane-spanning stretches (helical) occupy residues 5-25 (LVAT…AAVL), 54-74 (AVGT…AEPA), 78-98 (LGVD…FGAM), 118-138 (AFPG…VFVV), and 142-162 (WALA…TPIL).

This sequence belongs to the CDP-archaeol synthase family. Mg(2+) is required as a cofactor.

The protein resides in the cell membrane. It catalyses the reaction 2,3-bis-O-(geranylgeranyl)-sn-glycerol 1-phosphate + CTP + H(+) = CDP-2,3-bis-O-(geranylgeranyl)-sn-glycerol + diphosphate. Its pathway is membrane lipid metabolism; glycerophospholipid metabolism. In terms of biological role, catalyzes the formation of CDP-2,3-bis-(O-geranylgeranyl)-sn-glycerol (CDP-archaeol) from 2,3-bis-(O-geranylgeranyl)-sn-glycerol 1-phosphate (DGGGP) and CTP. This reaction is the third ether-bond-formation step in the biosynthesis of archaeal membrane lipids. In Halorubrum lacusprofundi (strain ATCC 49239 / DSM 5036 / JCM 8891 / ACAM 34), this protein is CDP-archaeol synthase.